The primary structure comprises 369 residues: 3,7-dimethylxanthine N-methyltransferase TCS1 (369 aa).

Residue Y24 coordinates S-adenosyl-L-homocysteine. Position 31 (T31) interacts with caffeine. 6 residues coordinate S-adenosyl-L-homocysteine: C66, N71, D103, L104, S138, and F139. Caffeine contacts are provided by Y156, H159, and W160. Mg(2+) is bound at residue N177. R225 lines the caffeine pocket. D263, F265, and N266 together coordinate Mg(2+). F321 contacts caffeine.

This sequence belongs to the methyltransferase superfamily. Type-7 methyltransferase family. The cofactor is Mg(2+). In terms of tissue distribution, expressed in young leaves and flowers.

It catalyses the reaction 7-methylxanthine + S-adenosyl-L-methionine = theobromine + S-adenosyl-L-homocysteine + H(+). The catalysed reaction is theobromine + S-adenosyl-L-methionine = caffeine + S-adenosyl-L-homocysteine + H(+). It carries out the reaction 1,7-dimethylxanthine + S-adenosyl-L-methionine = caffeine + S-adenosyl-L-homocysteine + H(+). It participates in alkaloid biosynthesis. In terms of biological role, involved in the biosynthesis of caffeine. Catalyzes the conversion of 7-methylxanthine (7mX) to theobromine and of theobromine to caffeine. Has 3-N- and 1-N-methylation activity. The sequence is that of 3,7-dimethylxanthine N-methyltransferase TCS1 from Camellia sinensis (Tea plant).